The chain runs to 138 residues: Acidic phospholipase A2 Ts-A1 (138 aa).

The N-terminal stretch at 1–16 is a signal peptide; that stretch reads MRTLWIMAVLQVGVEG. Cystine bridges form between cysteine 42/cysteine 131, cysteine 44/cysteine 60, cysteine 59/cysteine 111, cysteine 65/cysteine 138, cysteine 66/cysteine 104, cysteine 73/cysteine 97, and cysteine 91/cysteine 102. Ca(2+) contacts are provided by phenylalanine 43, glycine 45, and glycine 47. Histidine 63 is an active-site residue. Aspartate 64 is a binding site for Ca(2+). Residue aspartate 105 is part of the active site.

Requires Ca(2+) as cofactor. As to expression, expressed by the venom gland.

Its subcellular location is the secreted. The catalysed reaction is a 1,2-diacyl-sn-glycero-3-phosphocholine + H2O = a 1-acyl-sn-glycero-3-phosphocholine + a fatty acid + H(+). Snake venom phospholipase A2 (PLA2) that shows a moderate inhibition of ADP-induced human platelet aggregation when tested on platelet rich plasma. Exhibits high hydrolytic activities and prefers the anionic micelles (dPPC with deoxycholate) to the zwitterionic micelles (dPPC with Triton X-100). PLA2 catalyzes the calcium-dependent hydrolysis of the 2-acyl groups in 3-sn-phosphoglycerides. The polypeptide is Acidic phospholipase A2 Ts-A1 (Trimeresurus stejnegeri (Chinese green tree viper)).